Here is a 433-residue protein sequence, read N- to C-terminus: 26S proteasome regulatory subunit 7 (433 aa).

Residues 1-22 are disordered; the sequence is MPDYLGADQRKTKEDEKDDKPI. A compositionally biased stretch (basic and acidic residues) spans 8-22; it reads DQRKTKEDEKDDKPI. Lys116 is modified (N6-acetyllysine). 216-223 serves as a coordination point for ATP; that stretch reads GPPGTGKT. An N6-acetyllysine modification is found at Lys422.

It belongs to the AAA ATPase family. In terms of assembly, component of the 19S proteasome regulatory particle complex. The 26S proteasome consists of a 20S core particle (CP) and two 19S regulatory subunits (RP). The regulatory particle is made of a lid composed of 9 subunits, a base containing 6 ATPases including PSMC2 and few additional components. Interacts with NDC80/HEC; this interaction is detected only during M phase. Interacts and SQSTM1. Interacts with PAAF1. Directly interacts with TRIM5. Monoubiquitinated by RNF181. Post-translationally, phosphorylated. Dephosphorylated by UBLCP1 which impairs PSMC2 ATPase activity and disrupts 26S proteasome assembly.

It is found in the cytoplasm. The protein localises to the nucleus. Functionally, component of the 26S proteasome, a multiprotein complex involved in the ATP-dependent degradation of ubiquitinated proteins. This complex plays a key role in the maintenance of protein homeostasis by removing misfolded or damaged proteins, which could impair cellular functions, and by removing proteins whose functions are no longer required. Therefore, the proteasome participates in numerous cellular processes, including cell cycle progression, apoptosis, or DNA damage repair. PSMC2 belongs to the heterohexameric ring of AAA (ATPases associated with diverse cellular activities) proteins that unfolds ubiquitinated target proteins that are concurrently translocated into a proteolytic chamber and degraded into peptides. This Bos taurus (Bovine) protein is 26S proteasome regulatory subunit 7 (PSMC2).